A 361-amino-acid chain; its full sequence is D-alanine--D-alanine ligase (361 aa).

The ATP-grasp domain occupies 134–344 (KILAQRAGVP…YTDLITKLID (211 aa)). 169-224 (ASQLGSDLFVKPSNQGSSVGVSHVTNEKEYKVALAEAFKYDDKVLVEETVHGTEVE) contributes to the ATP binding site. Mg(2+)-binding residues include Asp-297, Glu-311, and Asn-313.

This sequence belongs to the D-alanine--D-alanine ligase family. Mg(2+) is required as a cofactor. It depends on Mn(2+) as a cofactor.

It localises to the cytoplasm. It catalyses the reaction 2 D-alanine + ATP = D-alanyl-D-alanine + ADP + phosphate + H(+). The protein operates within cell wall biogenesis; peptidoglycan biosynthesis. In terms of biological role, cell wall formation. This Lactobacillus johnsonii (strain CNCM I-12250 / La1 / NCC 533) protein is D-alanine--D-alanine ligase.